A 291-amino-acid chain; its full sequence is Protease HtpX (291 aa).

2 helical membrane-spanning segments follow: residues 4–24 and 32–52; these read IILF…ILSF and ISGL…ISLL. H139 contributes to the Zn(2+) binding site. E140 is a catalytic residue. Zn(2+) is bound at residue H143. 2 helical membrane-spanning segments follow: residues 158–178 and 192–212; these read IVNT…SSIL and WVYI…ASII. Residue E221 coordinates Zn(2+).

The protein belongs to the peptidase M48B family. Zn(2+) serves as cofactor.

Its subcellular location is the cell membrane. This Buchnera aphidicola subsp. Baizongia pistaciae (strain Bp) protein is Protease HtpX.